We begin with the raw amino-acid sequence, 285 residues long: Homeobox protein vex1 (285 aa).

2 disordered regions span residues 30–54 (KSGNPDKESNISLPSRATGPTLPSV) and 69–88 (NEERSPPVKDQLHSQPAPQE). Residues 69-80 (NEERSPPVKDQL) are compositionally biased toward basic and acidic residues. Residues 131–190 (AARARTKFSPEQLEELERSFKENRYIGSSEKRRLSKVLKLSETQIKTWFQNRRMKFKRQT) constitute a DNA-binding region (homeobox).

In terms of tissue distribution, widely expressed in the embryo prior to gastrulation. Becomes restricted to the ventral marginal zone by mid/late gastrulation. Ventral localization persists during gastrulation and neurulation in the ventral region of the closed blastopore and in the proctodeum during tail bud stages.

It localises to the nucleus. Its function is as follows. Transcriptional repressor. Acts in a ventral signaling pathway downstream of bmp4 to antagonize the Spemann organizer and ventrally pattern the embryonic mesoderm. Represses transcription of the dorsal genes gsc and otx2. This is Homeobox protein vex1 from Xenopus laevis (African clawed frog).